The sequence spans 49 residues: MSPFIGITSAALVSGSILLAGLGVVPAVAGGLLAFGIQRVIMTVITVMQ.

This is an uncharacterized protein from Escherichia coli (Bacteriophage T4).